We begin with the raw amino-acid sequence, 370 residues long: Translocating chain-associated membrane protein 2 (370 aa).

Residues 1 to 22 are Cytoplasmic-facing; sequence MAFRRRTKSYPLFSQEFIIHNH. The helical transmembrane segment at 23-43 threads the bilayer; that stretch reads ADIGFCLVLCVLIGLMFEVTA. Over 44–75 the chain is Extracellular; that stretch reads KTAFLFILPQYNISVPTADSETVHYHYGPKDL. N55 is a glycosylation site (N-linked (GlcNAc...) asparagine). A helical transmembrane segment spans residues 76–96; sequence VTILFYVVITIIFHAVVQEYI. Topologically, residues 97–119 are cytoplasmic; that stretch reads LDKISKRLHLSKVKHSKFNESGQ. Residues 112–321 form the TLC domain; sequence SKFNESGQLL…HSQLRHWREY (210 aa). The helical transmembrane segment at 120–140 threads the bilayer; it reads LLVFHLSAVAWCFYVIVTEGY. The Extracellular portion of the chain corresponds to 141 to 159; that stretch reads LTNPRSLWEDYPHVYLSFQ. A helical transmembrane segment spans residues 160–180; it reads VKFFYLGQLAYWLHSLPELYF. The Cytoplasmic portion of the chain corresponds to 181 to 191; the sequence is QKVRKEEVPRQ. The chain crosses the membrane as a helical span at residues 192 to 209; sequence LQYICLYLLHITGAYLLN. Residues 210–214 lie on the Extracellular side of the membrane; the sequence is LSRLG. A helical membrane pass occupies residues 215–235; the sequence is LILLLLQYSTEALFHMARLFH. The Cytoplasmic segment spans residues 236 to 250; it reads FADENNERLFNAWAA. A helical membrane pass occupies residues 251–271; it reads VFGVTRLFILTLAVLTIGFGL. Topologically, residues 272–287 are extracellular; sequence ARVENQVFDPEKGNFN. A helical transmembrane segment spans residues 288–308; it reads TLPCRLGMLLLVCVAQAWLMW. Topologically, residues 309-370 are cytoplasmic; it reads RFIHSQLRHW…SSRTKKLKSP (62 aa). Residues 332–370 form a disordered region; the sequence is SAVPRPPAKLLKREPGYHENGVVKAENGTSSRTKKLKSP.

The protein belongs to the TRAM family. In terms of assembly, interacts with COL1A1. Interacts with SERCA2B.

Its subcellular location is the membrane. Necessary for collagen type I synthesis. May couple the activity of the ER Ca(2+) pump SERCA2B with the activity of the translocon. This coupling may increase the local Ca(2+) concentration at the site of collagen synthesis, and a high Ca(2+) concentration may be necessary for the function of molecular chaperones involved in collagen folding. Required for proper insertion of the first transmembrane helix N-terminus of TM4SF20 into the ER lumen, may act as a ceramide sensor for regulated alternative translocation (RAT). The polypeptide is Translocating chain-associated membrane protein 2 (Tram2) (Mus musculus (Mouse)).